A 430-amino-acid chain; its full sequence is MALLLSLSLLATTISAQQIGTPEIRPRLTTYHCTSANGCTEQNTSVVLDAATHPIHDASNPSVSCTTSNGLNPALCPDKQTCADNCVIDGITDYAAHGVETHGSRLTLTQYRNVNGALSSVSPRVYLVDESDPDEQEYRALSLLAQEFTFTVNVSALPCGMNGALYLSEMSPSGGRSALNPAGASYGTGYCDAQCYVNPWINGEGNINGYGACCNEMDIWEANSRSTGFTPHACLYEPEETEGRGVYECASEDECDSAGENDGICDKWGCGFNPYALGNTEYYGRGQGFEVDTKEPFTVVTQFLTDDGTSTGALTEIRRLYIQNGQVIENAVVSSGADSLTDSLCASTASWFDSYGGMEGMGRALGRGMVLAMSIWNDAGGYMQWLDGGDAGPCNATEGAPEFIEEHTPWTRVVFEDLKWGDIGSTFQAS.

The signal sequence occupies residues 1–16 (MALLLSLSLLATTISA). N-linked (GlcNAc...) asparagine glycans are attached at residues Asn-43 and Asn-153. Glu-216 (nucleophile) is an active-site residue. The active-site Proton donor is the Glu-221. An N-linked (GlcNAc...) asparagine glycan is attached at Asn-395.

This sequence belongs to the glycosyl hydrolase 7 (cellulase C) family.

It is found in the secreted. The catalysed reaction is Endohydrolysis of (1-&gt;4)-beta-D-glucosidic linkages in cellulose, lichenin and cereal beta-D-glucans.. Its function is as follows. Has endoglucanase activity on substrates containing beta-1,4 glycosidic bonds, like in carboxymethylcellulose (CMC), hydroxyethylcellulose (HEC) and beta-glucan. Involved in the degradation of complex natural cellulosic substrates. In Emericella nidulans (strain FGSC A4 / ATCC 38163 / CBS 112.46 / NRRL 194 / M139) (Aspergillus nidulans), this protein is Endo-beta-1,4-glucanase celB (celB).